We begin with the raw amino-acid sequence, 435 residues long: Bud site selection protein RAX1 (435 aa).

Over 1-297 the chain is Cytoplasmic; the sequence is MKEELSKVSS…PFSNHTSISR (297 aa). One can recognise an RGS domain in the interval 159 to 248; the sequence is VDEIMKRRSQ…LEMDCFPKFL (90 aa). At serine 167 the chain carries Phosphoserine. Residues 298 to 318 form a helical membrane-spanning segment; it reads IGFGLLWLGIGFWIGYVLIFL. Residues 319–325 lie on the Extracellular side of the membrane; the sequence is AYSRAIR. A helical transmembrane segment spans residues 326–346; it reads VVTVVPFTLGCYCIVCGMYQV. The Cytoplasmic portion of the chain corresponds to 347-409; it reads DIVYSWFGVT…FTRQLLRKRG (63 aa). A helical transmembrane segment spans residues 410–430; that stretch reads LWCLLLVVGATAAFTVIFSCV. Over 431–435 the chain is Extracellular; that stretch reads PGRRV.

Forms an heterodimeric complex with RAX2. Also interacts with BUD8 and BUD9.

The protein resides in the cell membrane. The protein localises to the bud neck. It is found in the bud tip. Functionally, required for the establishment of the bipolar budding pattern. Involved in selecting bud sites at both the distal and proximal poles of daughter cells as well as near previously used division sites on mother cells. The RAX1-RAX2 complex performs the asymmetric localization of the two cortical landmarks, BUD8 and BUD9, at the distal and proximal poles, respectively. The polypeptide is Bud site selection protein RAX1 (Saccharomyces cerevisiae (strain ATCC 204508 / S288c) (Baker's yeast)).